We begin with the raw amino-acid sequence, 334 residues long: Heat-inducible transcription repressor HrcA (334 aa).

This sequence belongs to the HrcA family.

Functionally, negative regulator of class I heat shock genes (grpE-dnaK-dnaJ and groELS operons). Prevents heat-shock induction of these operons. This chain is Heat-inducible transcription repressor HrcA, found in Paracidovorax citrulli (strain AAC00-1) (Acidovorax citrulli).